We begin with the raw amino-acid sequence, 639 residues long: Carbon monoxide dehydrogenase (639 aa).

Cys-41, Cys-49, Cys-50, Cys-53, Cys-58, and Cys-72 together coordinate [4Fe-4S] cluster. Residues His-265, Cys-300, Cys-338, Cys-451, Cys-481, and Cys-531 each coordinate [Ni-4Fe-4S] cluster.

The protein belongs to the Ni-containing carbon monoxide dehydrogenase family. In terms of assembly, homodimer. Requires [4Fe-4S] cluster as cofactor. It depends on [Ni-4Fe-4S] cluster as a cofactor.

Its subcellular location is the cytoplasm. It localises to the cell inner membrane. It carries out the reaction CO + 2 oxidized [2Fe-2S]-[ferredoxin] + H2O = 2 reduced [2Fe-2S]-[ferredoxin] + CO2 + 2 H(+). In terms of biological role, allows growth in a CO-dependent manner in the dark. CODH oxidizes carbon monoxide coupled, via CooF, to the reduction of a hydrogen cation by a hydrogenase (possibly CooH). This is Carbon monoxide dehydrogenase (cooS) from Rhodospirillum rubrum.